Consider the following 529-residue polypeptide: Zinc metalloproteinase MspA (529 aa).

A signal peptide spans 1–24; that stretch reads MHHNYYLSPLAVALALGMVSPAKA. Positions 25–204 are excised as a propeptide; it reads ADPILLQNAS…PFVQWNDIKT (180 aa). A Zn(2+)-binding site is contributed by His-365. The active site involves Glu-366. Positions 369 and 389 each coordinate Zn(2+). Residue His-451 is the Proton donor of the active site.

This sequence belongs to the peptidase M4 family. The cofactor is Zn(2+).

The sequence is that of Zinc metalloproteinase MspA (mspA) from Legionella longbeachae.